The following is a 614-amino-acid chain: Glucose oxidase 1 (614 aa).

Positions 1–15 are cleaved as a signal peptide; the sequence is MKSIILSCFVISAAA. Residues Leu-52, Thr-53, and Glu-73 each coordinate FAD. A glycan (N-linked (GlcNAc...) asparagine) is linked at Asn-112. A disordered region spans residues 117-136; sequence IRSGNGLGGSTLTNGGSWTR. FAD-binding residues include Ser-126, Asn-130, Gly-131, and Ser-133. N-linked (GlcNAc...) asparagine glycosylation is found at Asn-184 and Asn-191. Cys-187 and Cys-229 form a disulfide bridge. FAD is bound at residue Val-273. N-linked (GlcNAc...) asparagine glycans are attached at residues Asn-279, Asn-383, and Asn-416. His-544 (proton acceptor) is an active-site residue. O2 contacts are provided by Arg-565 and Val-566. Residues Gly-577 and Met-589 each contribute to the FAD site.

Belongs to the GMC oxidoreductase family. As to quaternary structure, homodimer. It depends on FAD as a cofactor.

Its subcellular location is the secreted. It localises to the cell wall. The protein localises to the cytoplasm. The protein resides in the extracellular space. It is found in the extracellular matrix. It catalyses the reaction beta-D-glucose + O2 = D-glucono-1,5-lactone + H2O2. In terms of biological role, glucose oxidase catalyzes the oxidation of beta-D-glucose to D-glucono-delta-lactone and hydrogen peroxide in the presence of molecular oxygen. The protein is Glucose oxidase 1 of Penicillium expansum (Blue mold rot fungus).